The sequence spans 338 residues: NADPH dehydrogenase (338 aa).

23 to 26 (SPMC) serves as a coordination point for FMN. Residue Tyr-28 coordinates substrate. 2 residues coordinate FMN: Ala-60 and Gln-102. 164-167 (HAAH) is a substrate binding site. Residues Arg-215 and 307 to 308 (GR) contribute to the FMN site.

This sequence belongs to the NADH:flavin oxidoreductase/NADH oxidase family. NamA subfamily. Homotetramer. Composed of a dimer of active dimers. Requires FMN as cofactor.

It carries out the reaction A + NADPH + H(+) = AH2 + NADP(+). With respect to regulation, inhibited by p-hydroxybenzaldehyde (pHBA) and p-nitrophenol (pNP). Functionally, catalyzes the reduction of the double bond of an array of alpha,beta-unsaturated aldehydes and ketones. It also reduces the nitro group of nitroester and nitroaromatic compounds. It could have a role in detoxification processes. The chain is NADPH dehydrogenase (namA) from Bacillus subtilis (strain 168).